A 72-amino-acid polypeptide reads, in one-letter code: uncharacterized protein (72 aa).

This is an uncharacterized protein from Haemophilus influenzae (strain ATCC 51907 / DSM 11121 / KW20 / Rd).